The primary structure comprises 589 residues: Intermediate filament protein ifb-1 (589 aa).

Residues 1 to 42 (MSSHKESSEYEMQYRSTIQPRTAVRSQSRQSGNYVSGGNGAG) are disordered. The segment at 8-84 (SEYEMQYRST…LEATDKEKKT (77 aa)) is head. Residues 14–30 (YRSTIQPRTAVRSQSRQ) show a composition bias toward polar residues. The 353-residue stretch at 81 to 433 (EKKTLQGLND…KMLEGEETRV (353 aa)) folds into the IF rod domain. The coil 1A stretch occupies residues 85–116 (LQGLNDRLGNYIDRVKKLEEQNRKLVADLDEL). The segment at 117-130 (RGKWGKDTSEIKIK) is linker 1. Positions 131-268 (YSESLSTARK…RVHEQEVKEL (138 aa)) are coil 1B. The tract at residues 269–285 (QALLAQAPADTREFFKN) is linker 12. The coil 2 stretch occupies residues 286-433 (ELALAIRDIK…KMLEGEETRV (148 aa)). Residues 434-588 (GLTQMVEQAV…THTQKTIQSG (155 aa)) are tail. The segment at 444-470 (KTHSLQQQENTDSTRSVRGEVSTKTTF) is disordered. The LTD domain occupies 466–584 (TKTTFQRSAK…EERATHTQKT (119 aa)).

The protein belongs to the intermediate filament family. Forms some heteromeric filaments with ifa-1, ifa-2, ifa-3 and probably ifa-4. In terms of tissue distribution, expressed in epidermal cells. Expressed in amphid sensory neurons, the excretory cells, the vulva, the uterus, the rectum and some neurons of the tail. Isoform a and isoform b display a similar pattern of expression. Isoform a is predominant in pharyngeal tonofilaments.

Its subcellular location is the cytoplasm. Its function is as follows. Cytoplasmic intermediate filaments provide mechanical strength to cells. Essential protein, involved in attachment structures in epidermal cells that connect muscles to the external cuticle. Required in morphogenesis and epidermal integrity. Probable component of embryonic epidermal attachment structures. Functions in larval muscle attachment independently of ifa-2. This chain is Intermediate filament protein ifb-1 (ifb-1), found in Caenorhabditis elegans.